An 83-amino-acid chain; its full sequence is Large ribosomal subunit protein bL28 (83 aa).

The protein belongs to the bacterial ribosomal protein bL28 family.

The chain is Large ribosomal subunit protein bL28 from Amoebophilus asiaticus (strain 5a2).